Consider the following 488-residue polypeptide: UDP-N-acetylmuramate--L-alanine ligase (488 aa).

Glycine 127–threonine 133 is a binding site for ATP.

Belongs to the MurCDEF family.

The protein resides in the cytoplasm. It carries out the reaction UDP-N-acetyl-alpha-D-muramate + L-alanine + ATP = UDP-N-acetyl-alpha-D-muramoyl-L-alanine + ADP + phosphate + H(+). The protein operates within cell wall biogenesis; peptidoglycan biosynthesis. Its function is as follows. Cell wall formation. This chain is UDP-N-acetylmuramate--L-alanine ligase, found in Shewanella baltica (strain OS223).